The sequence spans 35 residues: U14-ctenitoxin-Pn1a (35 aa).

3 disulfides stabilise this stretch: C3–C17, C10–C22, and C16–C32.

Expressed by the venom gland.

Its subcellular location is the secreted. Its function is as follows. Neurotoxin. This is U14-ctenitoxin-Pn1a from Phoneutria nigriventer (Brazilian armed spider).